A 421-amino-acid chain; its full sequence is Glycosaminoglycan xylosylkinase homolog (421 aa).

The N-terminal stretch at 1–21 is a signal peptide; it reads MNKRSVIIAGIVASLLGLALG. Residue Asn83 is glycosylated (N-linked (GlcNAc...) asparagine). 2 residues coordinate ATP: Gln131 and Lys147. Asp166 is a Mn(2+) binding site. Intrachain disulfides connect Cys225-Cys240 and Cys230-Cys233. 252 to 255 is an ATP binding site; it reads IYIV. Cystine bridges form between Cys285/Cys351 and Cys352/Cys409. Asp314 is a catalytic residue. The ATP site is built by Glu319 and Asp329. Asp329 lines the Mn(2+) pocket.

This sequence belongs to the FAM20 family. It depends on Mn(2+) as a cofactor.

It localises to the golgi apparatus. Its subcellular location is the endoplasmic reticulum. It carries out the reaction 3-O-(beta-D-galactosyl-(1-&gt;3)-beta-D-galactosyl-(1-&gt;4)-beta-D-xylosyl)-L-seryl-[protein] + ATP = 3-O-(beta-D-galactosyl-(1-&gt;3)-beta-D-galactosyl-(1-&gt;4)-beta-D-2-O-phosphoxylosyl)-L-seryl-[protein] + ADP + H(+). Functionally, kylose kinase that mediates the 2-O-phosphorylation of xylose in the glycosaminoglycan-protein linkage region of proteoglycans. The polypeptide is Glycosaminoglycan xylosylkinase homolog (Drosophila melanogaster (Fruit fly)).